The primary structure comprises 127 residues: Aspartate 1-decarboxylase (127 aa).

The active-site Schiff-base intermediate with substrate; via pyruvic acid is the S25. At S25 the chain carries Pyruvic acid (Ser). T57 provides a ligand contact to substrate. Y58 serves as the catalytic Proton donor. A substrate-binding site is contributed by 73 to 75; it reads GAA.

Belongs to the PanD family. Heterooctamer of four alpha and four beta subunits. Pyruvate serves as cofactor. Post-translationally, is synthesized initially as an inactive proenzyme, which is activated by self-cleavage at a specific serine bond to produce a beta-subunit with a hydroxyl group at its C-terminus and an alpha-subunit with a pyruvoyl group at its N-terminus.

It is found in the cytoplasm. It catalyses the reaction L-aspartate + H(+) = beta-alanine + CO2. The protein operates within cofactor biosynthesis; (R)-pantothenate biosynthesis; beta-alanine from L-aspartate: step 1/1. Functionally, catalyzes the pyruvoyl-dependent decarboxylation of aspartate to produce beta-alanine. This Clostridium botulinum (strain Loch Maree / Type A3) protein is Aspartate 1-decarboxylase.